A 248-amino-acid chain; its full sequence is PF03932 family protein CutC (248 aa).

This sequence belongs to the CutC family. Homodimer.

It localises to the cytoplasm. This chain is PF03932 family protein CutC, found in Salmonella typhimurium (strain LT2 / SGSC1412 / ATCC 700720).